A 448-amino-acid polypeptide reads, in one-letter code: MNKTNEITLSPHWEDRISNEQKLRRNDQRSVFQRDRARILHSAAFRRLQAKTQVHGPGSANDFYRTRLTHSLEVSQIGTGVVAQLKLRQPEFRALLTSTSLMESICLAHDIGHPPFGHGGEIALNYMMRDHGGFEGNGQTLRILSKLEPYTEHFGMNLARRTLLGVLKYPAFLDQVHSTERPQEVTNVRHLKSIDWHPPKGVYRDDADILNWILKPLSDVDKALFSTFRFQQDSQNTHRKTRFKSIDCSIMELADDIAYGVHDLEDAIVMGIVTRNQWQESVASKLAECGDEWFEANIETISDKLFSGLQYQRKDGIGSIVNALLTSITIKPTTFNDEAEFESELLRWNAFLSPSMSYALEVLKKFVGQFVIHNSEMQRIEYKGQQIVMEIFDALNSDPERLLPENDKREWREAKESGANAHRVIADYIAGMTDGYAQRLYNQLFVPI.

The 194-residue stretch at R67 to G260 folds into the HD domain.

The protein belongs to the dGTPase family. Type 2 subfamily.

The protein is Deoxyguanosinetriphosphate triphosphohydrolase-like protein of Aliivibrio fischeri (strain ATCC 700601 / ES114) (Vibrio fischeri).